Reading from the N-terminus, the 473-residue chain is Putative BTB/POZ domain-containing protein R765 (473 aa).

One can recognise a BTB domain in the interval 2 to 72; that stretch reads TNIQLVIKDD…KIYDREITAD (71 aa).

Belongs to the mimivirus BTB/WD family.

The protein is Putative BTB/POZ domain-containing protein R765 of Acanthamoeba polyphaga mimivirus (APMV).